Here is a 599-residue protein sequence, read N- to C-terminus: Elongation factor 4 (599 aa).

Positions 2-184 (KNIRNFSIIA…RLVRDIPPPE (183 aa)) constitute a tr-type G domain. Residues 14–19 (DHGKST) and 131–134 (NKID) contribute to the GTP site.

Belongs to the TRAFAC class translation factor GTPase superfamily. Classic translation factor GTPase family. LepA subfamily.

It localises to the cell inner membrane. It catalyses the reaction GTP + H2O = GDP + phosphate + H(+). Functionally, required for accurate and efficient protein synthesis under certain stress conditions. May act as a fidelity factor of the translation reaction, by catalyzing a one-codon backward translocation of tRNAs on improperly translocated ribosomes. Back-translocation proceeds from a post-translocation (POST) complex to a pre-translocation (PRE) complex, thus giving elongation factor G a second chance to translocate the tRNAs correctly. Binds to ribosomes in a GTP-dependent manner. In Shigella sonnei (strain Ss046), this protein is Elongation factor 4.